The primary structure comprises 417 residues: Phosphoglycerate kinase (417 aa).

Residues 24-26 (DLN), Arg-44, 67-70 (HLGR), Arg-126, and Arg-170 each bind substrate. ATP contacts are provided by residues Lys-220, Gly-316, Glu-347, and 373-376 (GGDS).

Belongs to the phosphoglycerate kinase family. In terms of assembly, monomer.

The protein localises to the cytoplasm. It carries out the reaction (2R)-3-phosphoglycerate + ATP = (2R)-3-phospho-glyceroyl phosphate + ADP. The protein operates within carbohydrate degradation; glycolysis; pyruvate from D-glyceraldehyde 3-phosphate: step 2/5. The sequence is that of Phosphoglycerate kinase from Renibacterium salmoninarum (strain ATCC 33209 / DSM 20767 / JCM 11484 / NBRC 15589 / NCIMB 2235).